The chain runs to 304 residues: Ribonuclease Z (304 aa).

Zn(2+) contacts are provided by H63, H65, D67, H68, H141, D208, and H266. The active-site Proton acceptor is the D67.

The protein belongs to the RNase Z family. Homodimer. Zn(2+) serves as cofactor.

The catalysed reaction is Endonucleolytic cleavage of RNA, removing extra 3' nucleotides from tRNA precursor, generating 3' termini of tRNAs. A 3'-hydroxy group is left at the tRNA terminus and a 5'-phosphoryl group is left at the trailer molecule.. Zinc phosphodiesterase, which displays some tRNA 3'-processing endonuclease activity. Probably involved in tRNA maturation, by removing a 3'-trailer from precursor tRNA. The sequence is that of Ribonuclease Z from Chlamydia trachomatis serovar D (strain ATCC VR-885 / DSM 19411 / UW-3/Cx).